The primary structure comprises 116 residues: Large ribosomal subunit protein bL19 (116 aa).

It belongs to the bacterial ribosomal protein bL19 family.

In terms of biological role, this protein is located at the 30S-50S ribosomal subunit interface and may play a role in the structure and function of the aminoacyl-tRNA binding site. This chain is Large ribosomal subunit protein bL19, found in Chloroflexus aggregans (strain MD-66 / DSM 9485).